The sequence spans 992 residues: Disks large-associated protein 4 (992 aa).

A compositionally biased stretch (basic and acidic residues) spans 1-20; sequence MKGLGDSRPRHLSDSLDPPH. 2 disordered regions span residues 1–31 and 157–225; these read MKGL…DRNP and MEGT…PASG. A compositionally biased stretch (gly residues) spans 162 to 171; that stretch reads GKVGGNGSKK. A compositionally biased stretch (basic and acidic residues) spans 172–194; it reads GGLEDGKGRRAKSKERAKAGEPK. Residues 199–208 are compositionally biased toward polar residues; sequence SNISGWWSSD. Residues serine 206 and serine 207 each carry the phosphoserine modification. Arginine 290 is modified (omega-N-methylarginine). A disordered region spans residues 342-396; that stretch reads TTLLSPRDMDSTAEGPIPCRRMRSGSYIKAMGDEDSDESGGGSPKPSPKTAARRQ. Phosphoserine occurs at positions 377, 380, 384, 388, 405, 415, and 421. Disordered stretches follow at residues 527-751, 763-798, and 915-992; these read SVSL…GPRQ, SYGD…AQPG, and TPEK…QTRL. Residues 528–554 show a composition bias toward low complexity; it reads VSLQSLSPPPSTGSLSNSRTLPSSSCL. Polar residues predominate over residues 576 to 591; the sequence is VTVQSSTESAQDTYLD. Phosphoserine occurs at positions 580, 581, 609, 611, 665, and 744. The span at 600–620 shows a compositional bias: low complexity; it reads TSQSGLSNSSDSLDSSTRPPS. Residue threonine 915 is modified to Phosphothreonine. Composition is skewed to basic and acidic residues over residues 915–925 and 940–958; these read TPEKRKEEKKP and VSRD…EARK. Over residues 969 to 978 the composition is skewed to polar residues; that stretch reads VRQNSATESA. The residue at position 973 (serine 973) is a Phosphoserine.

Belongs to the SAPAP family. As to quaternary structure, interacts with DLG1 and DLG4/PSD-95.

Its subcellular location is the membrane. Functionally, may play a role in the molecular organization of synapses and neuronal cell signaling. Could be an adapter protein linking ion channel to the subsynaptic cytoskeleton. May induce enrichment of PSD-95/SAP90 at the plasma membrane. The chain is Disks large-associated protein 4 (Dlgap4) from Mus musculus (Mouse).